Reading from the N-terminus, the 230-residue chain is Ureidoacrylate amidohydrolase RutB (230 aa).

D24 functions as the Proton acceptor in the catalytic mechanism. K133 is a catalytic residue. C166 (nucleophile) is an active-site residue.

It belongs to the isochorismatase family. RutB subfamily.

The catalysed reaction is (Z)-3-ureidoacrylate + H2O + H(+) = (Z)-3-aminoacrylate + NH4(+) + CO2. It catalyses the reaction (Z)-3-ureidoacrylate + H2O = (Z)-3-aminoacrylate + carbamate + H(+). The enzyme catalyses (Z)-2-methylureidoacrylate + H2O + H(+) = (Z)-2-methylaminoacrylate + NH4(+) + CO2. In terms of biological role, hydrolyzes ureidoacrylate to form aminoacrylate and carbamate. The carbamate hydrolyzes spontaneously, thereby releasing one of the nitrogen atoms of the pyrimidine ring as ammonia and one of its carbon atoms as CO2. The sequence is that of Ureidoacrylate amidohydrolase RutB from Escherichia coli O44:H18 (strain 042 / EAEC).